The following is a 276-amino-acid chain: Pantothenate synthetase (276 aa).

27 to 34 lines the ATP pocket; sequence MGALHRGH. Residue His-34 is the Proton donor of the active site. Gln-58 provides a ligand contact to (R)-pantoate. A beta-alanine-binding site is contributed by Gln-58. Residue 147 to 150 coordinates ATP; that stretch reads GKKD. Gln-153 lines the (R)-pantoate pocket. Residues Val-176 and 184–187 each bind ATP; that span reads LSSR.

The protein belongs to the pantothenate synthetase family. In terms of assembly, homodimer.

It localises to the cytoplasm. It catalyses the reaction (R)-pantoate + beta-alanine + ATP = (R)-pantothenate + AMP + diphosphate + H(+). The protein operates within cofactor biosynthesis; (R)-pantothenate biosynthesis; (R)-pantothenate from (R)-pantoate and beta-alanine: step 1/1. In terms of biological role, catalyzes the condensation of pantoate with beta-alanine in an ATP-dependent reaction via a pantoyl-adenylate intermediate. The polypeptide is Pantothenate synthetase (Helicobacter pylori (strain J99 / ATCC 700824) (Campylobacter pylori J99)).